The chain runs to 62 residues: Large ribosomal subunit protein uL30 (62 aa).

The protein belongs to the universal ribosomal protein uL30 family. In terms of assembly, part of the 50S ribosomal subunit.

This Beutenbergia cavernae (strain ATCC BAA-8 / DSM 12333 / CCUG 43141 / JCM 11478 / NBRC 16432 / NCIMB 13614 / HKI 0122) protein is Large ribosomal subunit protein uL30.